A 375-amino-acid polypeptide reads, in one-letter code: Pulmonary surfactant-associated protein D (375 aa).

The signal sequence occupies residues M1 to E20. S-nitrosocysteine is present on residues C35 and C40. The interval S45–L221 is disordered. In terms of domain architecture, Collagen-like spans G46–P222. A compositionally biased stretch (basic and acidic residues) spans R50–D65. The span at P66–P86 shows a compositional bias: low complexity. P78 carries the post-translational modification 4-hydroxyproline. 5-hydroxylysine is present on K87. N90 carries an N-linked (GlcNAc...) asparagine glycan. Residue P96 is modified to 4-hydroxyproline. 5-hydroxylysine is present on K99. Residues S105–P114 are compositionally biased toward pro residues. Low complexity-rich tracts occupy residues P116–Q132 and K138–P150. 2 positions are modified to 4-hydroxyproline: P171 and P177. The span at K204–K216 shows a compositional bias: basic and acidic residues. Residues D223–E252 are a coiled coil. The 116-residue stretch at V260–F375 folds into the C-type lectin domain. Cystine bridges form between C281-C373 and C351-C365.

Belongs to the SFTPD family. As to quaternary structure, oligomeric complex of 4 set of homotrimers. The N-terminus is blocked. In terms of processing, hydroxylation on proline residues within the sequence motif, GXPG, is most likely to be 4-hydroxy as this fits the requirement for 4-hydroxylation in vertebrates. Post-translationally, S-nitrosylation at Cys-35 and Cys-40 alters the quaternary structure which results in a pro-inflammatory chemoattractive signaling activity with macrophages. Expressed in lung, brain, pancreas and adipose tissue (mainly mature adipocytes).

It localises to the secreted. Its subcellular location is the extracellular space. The protein resides in the extracellular matrix. It is found in the surface film. In terms of biological role, contributes to the lung's defense against inhaled microorganisms, organic antigens and toxins. Interacts with compounds such as bacterial lipopolysaccharides, oligosaccharides and fatty acids and modulates leukocyte action in immune response. May participate in the extracellular reorganization or turnover of pulmonary surfactant. Binds strongly maltose residues and to a lesser extent other alpha-glucosyl moieties. The sequence is that of Pulmonary surfactant-associated protein D (SFTPD) from Homo sapiens (Human).